The following is a 410-amino-acid chain: Maintenance of mitochondrial morphology protein 1 (410 aa).

Over 1–19 (MTPDSCPVRPEPTLSFTQG) the chain is Lumenal. A helical membrane pass occupies residues 20–40 (LIVGQISVVFLIAAFIKFFIF). At 41-410 (GDPPSAEETA…PMPGSLAVDD (370 aa)) the chain is on the cytoplasmic side. The span at 71–87 (LRTSNQRPGSQQQQSVL) shows a compositional bias: polar residues. A disordered region spans residues 71 to 98 (LRTSNQRPGSQQQQSVLNRKKSSILRSG). In terms of domain architecture, SMP-LTD spans 119–335 (QPESLDWFNV…EPRFQEIPLP (217 aa)). A disordered region spans residues 380 to 410 (ARQAAQRDSLRYRRPRADDAFPMPGSLAVDD). Over residues 387 to 398 (DSLRYRRPRADD) the composition is skewed to basic and acidic residues.

It belongs to the MMM1 family. Homodimer. Component of the ER-mitochondria encounter structure (ERMES) or MDM complex, composed of MMM1, MDM10, MDM12 and MDM34. An MMM1 homodimer associates with one molecule of MDM12 on each side in a pairwise head-to-tail manner, and the SMP-LTD domains of MMM1 and MDM12 generate a continuous hydrophobic tunnel for phospholipid trafficking.

The protein localises to the endoplasmic reticulum membrane. Component of the ERMES/MDM complex, which serves as a molecular tether to connect the endoplasmic reticulum (ER) and mitochondria. Components of this complex are involved in the control of mitochondrial shape and protein biogenesis, and function in nonvesicular lipid trafficking between the ER and mitochondria. The MDM12-MMM1 subcomplex functions in the major beta-barrel assembly pathway that is responsible for biogenesis of all outer membrane beta-barrel proteins, and acts in a late step after the SAM complex. The MDM10-MDM12-MMM1 subcomplex further acts in the TOM40-specific pathway after the action of the MDM12-MMM1 complex. Essential for establishing and maintaining the structure of mitochondria and maintenance of mtDNA nucleoids. In Pyricularia oryzae (strain 70-15 / ATCC MYA-4617 / FGSC 8958) (Rice blast fungus), this protein is Maintenance of mitochondrial morphology protein 1.